The primary structure comprises 268 residues: 3-methyl-2-oxobutanoate hydroxymethyltransferase (268 aa).

Positions 41 and 80 each coordinate Mg(2+). Residues 41 to 42 (DS), Asp80, and Lys110 contribute to the 3-methyl-2-oxobutanoate site. Mg(2+) is bound at residue Glu112. Glu178 (proton acceptor) is an active-site residue.

Belongs to the PanB family. As to quaternary structure, homodecamer; pentamer of dimers. Requires Mg(2+) as cofactor.

It localises to the cytoplasm. It catalyses the reaction 3-methyl-2-oxobutanoate + (6R)-5,10-methylene-5,6,7,8-tetrahydrofolate + H2O = 2-dehydropantoate + (6S)-5,6,7,8-tetrahydrofolate. It participates in cofactor biosynthesis; coenzyme A biosynthesis. Its function is as follows. Catalyzes the reversible reaction in which hydroxymethyl group from 5,10-methylenetetrahydrofolate is transferred onto alpha-ketoisovalerate to form ketopantoate. The sequence is that of 3-methyl-2-oxobutanoate hydroxymethyltransferase from Natronomonas pharaonis (strain ATCC 35678 / DSM 2160 / CIP 103997 / JCM 8858 / NBRC 14720 / NCIMB 2260 / Gabara) (Halobacterium pharaonis).